The sequence spans 280 residues: Large ribosomal subunit protein uL2 (280 aa).

Disordered stretches follow at residues 33 to 55 (LTEG…RRRG) and 199 to 266 (DNSN…KASQ). Basic residues predominate over residues 209–219 (GRMRHKGKRPS).

This sequence belongs to the universal ribosomal protein uL2 family. In terms of assembly, part of the 50S ribosomal subunit. Forms a bridge to the 30S subunit in the 70S ribosome.

One of the primary rRNA binding proteins. Required for association of the 30S and 50S subunits to form the 70S ribosome, for tRNA binding and peptide bond formation. It has been suggested to have peptidyltransferase activity; this is somewhat controversial. Makes several contacts with the 16S rRNA in the 70S ribosome. The chain is Large ribosomal subunit protein uL2 from Ruegeria sp. (strain TM1040) (Silicibacter sp.).